The following is a 415-amino-acid chain: Glutamate-1-semialdehyde 2,1-aminomutase (415 aa).

Lysine 260 carries the post-translational modification N6-(pyridoxal phosphate)lysine.

The protein belongs to the class-III pyridoxal-phosphate-dependent aminotransferase family. HemL subfamily. It depends on pyridoxal 5'-phosphate as a cofactor.

Its subcellular location is the cytoplasm. The catalysed reaction is (S)-4-amino-5-oxopentanoate = 5-aminolevulinate. It participates in porphyrin-containing compound metabolism; protoporphyrin-IX biosynthesis; 5-aminolevulinate from L-glutamyl-tRNA(Glu): step 2/2. The protein is Glutamate-1-semialdehyde 2,1-aminomutase of Methanoculleus marisnigri (strain ATCC 35101 / DSM 1498 / JR1).